The primary structure comprises 217 residues: Zinc finger CCHC-type and RNA-binding motif-containing protein 1 (217 aa).

In terms of domain architecture, RRM spans 10–88; that stretch reads STVYVSNLPF…RVIKASIAID (79 aa). Residues 105-122 form a CCHC-type zinc finger; that stretch reads SKCYECGESGHLSYACPK. The interval 120–217 is disordered; the sequence is CPKNMLGERE…YFSDEEELSD (98 aa). Positions 145–163 are enriched in acidic residues; the sequence is PEEEIEEVEVSEEEGEDPA. A phosphoserine mark is found at Ser-155, Ser-210, and Ser-216.

Component of the U11/U12 snRNPs that are part of the U12-type spliceosome. Interacts with ZRSR1.

Its subcellular location is the nucleus. The protein localises to the nucleoplasm. The protein is Zinc finger CCHC-type and RNA-binding motif-containing protein 1 (Zcrb1) of Rattus norvegicus (Rat).